Consider the following 285-residue polypeptide: Involucrin (285 aa).

Disordered regions lie at residues 1 to 93 (MSQQ…QEQK), 120 to 256 (LEQQ…AQVQ), and 266 to 285 (LPLIEQQHQKQEVHDPPEHQ). The segment covering 27–39 (IDTQQEQVKQPTS) has biased composition (polar residues). 3 stretches are compositionally biased toward low complexity: residues 72 to 87 (EQQCEPQEQEQQQKQQ), 120 to 129 (LEQQQEQQES), and 137 to 147 (EQCLEQQQEQQ). Basic and acidic residues-rich tracts occupy residues 149–165 (SQEKELHLEQEQQKEEL), 175–185 (EQCEKHQEAKN), and 200–233 (QQKEQLEQEKKLVDQHLDQEPAQRTEQPEKKEEQ). A compositionally biased stretch (low complexity) spans 235-248 (LEQQGQQEGQLEQP). Positions 272–285 (QHQKQEVHDPPEHQ) are enriched in basic and acidic residues.

This sequence belongs to the involucrin family. As to quaternary structure, directly or indirectly cross-linked to cornifelin (CNFN). In terms of processing, substrate of transglutaminase. Specific glutamines or lysines are cross-linked to keratins, desmoplakin and to inter involucrin molecules. As to expression, keratinocytes of epidermis and other stratified squamous epithelia.

The protein resides in the cytoplasm. Part of the insoluble cornified cell envelope (CE) of stratified squamous epithelia. This Canis lupus familiaris (Dog) protein is Involucrin (IVL).